A 140-amino-acid chain; its full sequence is Zinc finger SWIM domain-containing protein 7 (140 aa).

The segment at 66–114 adopts an SWIM-type zinc-finger fold; it reads YQVLGSSSKTYTCLASCHYCSCPAFAFSVLRKSDSILCKHLLAVYLSQV.

This sequence belongs to the SWS1 family. Interacts with RAD51D and XRCC3; involved in homologous recombination repair. Interacts with SWSAP1; they form a functional complex involved in homologous recombination repair and stabilize each other. As to expression, expressed in ovary and testis.

Its subcellular location is the nucleus. Its function is as follows. Involved in early stages of the homologous recombination repair (HRR) pathway of double-stranded DNA breaks arising during DNA replication or induced by DNA-damaging agents. Required for meiotic progression, hence for fertility. The chain is Zinc finger SWIM domain-containing protein 7 (ZSWIM7) from Homo sapiens (Human).